A 70-amino-acid chain; its full sequence is AEIKVRDGYIVYPNNCVYHCGLNPYCNDLCTKNGAKSGYCQWLTKWGNACYCYALPEKVPIKDPSYKCYS.

The 64-residue stretch at 6–69 folds into the LCN-type CS-alpha/beta domain; that stretch reads RDGYIVYPNN…PIKDPSYKCY (64 aa). Cystine bridges form between Cys-16–Cys-68, Cys-20–Cys-40, Cys-26–Cys-50, and Cys-30–Cys-52.

It belongs to the long (4 C-C) scorpion toxin superfamily. Sodium channel inhibitor family. Alpha subfamily. As to expression, expressed by the venom gland.

The protein localises to the secreted. Its function is as follows. Alpha toxins bind voltage-independently at site-3 of sodium channels (Nav) and inhibit the inactivation of the activated channels, thereby blocking neuronal transmission. This toxin is active against rat Nav1.2/SCN2A and B.germanica Nav1. In Buthus occitanus tunetanus (Common European scorpion), this protein is Alpha-toxin Bot9.